The following is a 1402-amino-acid chain: DNA-directed RNA polymerase subunit beta' (1402 aa).

Zn(2+)-binding residues include Cys70, Cys72, Cys85, and Cys88. 3 residues coordinate Mg(2+): Asp460, Asp462, and Asp464. Residues Cys812, Cys886, Cys893, and Cys896 each coordinate Zn(2+). The tract at residues Asp1373–Asp1402 is disordered.

It belongs to the RNA polymerase beta' chain family. In terms of assembly, the RNAP catalytic core consists of 2 alpha, 1 beta, 1 beta' and 1 omega subunit. When a sigma factor is associated with the core the holoenzyme is formed, which can initiate transcription. Requires Mg(2+) as cofactor. It depends on Zn(2+) as a cofactor.

It catalyses the reaction RNA(n) + a ribonucleoside 5'-triphosphate = RNA(n+1) + diphosphate. In terms of biological role, DNA-dependent RNA polymerase catalyzes the transcription of DNA into RNA using the four ribonucleoside triphosphates as substrates. In Dichelobacter nodosus (strain VCS1703A), this protein is DNA-directed RNA polymerase subunit beta'.